A 123-amino-acid polypeptide reads, in one-letter code: Putative hypoxanthine phosphoribosyltransferase (123 aa).

Functionally, may play a role in purine salvage. This is Putative hypoxanthine phosphoribosyltransferase from Methanosarcina mazei (strain ATCC BAA-159 / DSM 3647 / Goe1 / Go1 / JCM 11833 / OCM 88) (Methanosarcina frisia).